The chain runs to 438 residues: Protein kinase PINOID (438 aa).

Residues 1-24 are disordered; the sequence is MLRESDGEMSLGTTNSPISSGTES. The segment covering 11 to 24 has biased composition (polar residues); that stretch reads LGTTNSPISSGTES. Residues 75-394 form the Protein kinase domain; that stretch reads FRLMRRIGAG…AAEVKVHPFF (320 aa). Residues 81-89 and K109 contribute to the ATP site; that span reads IGAGDIGTV. The active-site Proton acceptor is D205. Positions 395–438 constitute an AGC-kinase C-terminal domain; sequence KGLNFALIRTLTPPEIPSSVVKKPMKSATFSGRSSNKPAAFDYF.

The protein belongs to the protein kinase superfamily. Ser/Thr protein kinase family. Interacts with PDK1, CML12 and PBP1. Component of a complex made of PINs (e.g. PIN1 and PIN2), MAB4/MELs (e.g. NPY1/MAB4 and NPY5/MEL1) and AGC kinases (e.g. D6PK and PID) at the plasma membrane. Binds directly to PIN2, NPY1/MAB4 and NPY5/MEL1. In terms of processing, autophosphorylated. Phosphorylated by PDK1. In terms of tissue distribution, expressed in root hair cells, shoot xylem parenchyma cells and endodermis around the vasculature. Expressed in anther primordia, vasculature of the growing flower stalk, young pedicels and bracts and developing sepals, but not in petals. In pistils, transiently expressed in the vasculature of the style and the septum, and in the integuments and funiculus of the developing ovule.

Its subcellular location is the cytoplasm. It localises to the cytosol. It is found in the cell membrane. It catalyses the reaction L-seryl-[protein] + ATP = O-phospho-L-seryl-[protein] + ADP + H(+). The enzyme catalyses L-threonyl-[protein] + ATP = O-phospho-L-threonyl-[protein] + ADP + H(+). Activated by magnesium and PDK1. Inhibited by staurosporine. Repressed by calcium. In terms of biological role, serine/threonine-protein kinase involved in the regulation of auxin signaling. Acts as a positive regulator of cellular auxin efflux and regulates organ development by enhancing polar auxin transport. Phosphorylates conserved serine residues in the PIN auxin efflux carriers. Phosphorylation of PIN proteins is required and sufficient for apical-basal PIN polarity that enables directional intercellular auxin fluxes, which mediate differential growth, tissue patterning and organogenesis. Phosphorylates PIN proteins (e.g. PIN1 and PIN2), especially when NPY proteins (e.g. NPY1/MAB4 and NPY5/MEL1) are recruited at the plasma membrane; this enhances the polarized localizations (apical or basal) of PINs in the cell by limiting their lateral diffusion-based escape. Acts in association with PIN1 to control the establishment of bilateral symmetry and promotion of cotyledon outgrowth. Regulates root gravitropism through modulation of PIN2-dependent basipetal auxin transport. Required for polarization of PIN3-dependent auxin transport for hypocotyl gravitropic response. The protein kinase activity of PID is essential for its auxin efflux regulatory function. PID kinase and PP2A phosphatase activities antagonistically regulate phosphorylation of PIN proteins, affecting PIN sorting. In Arabidopsis thaliana (Mouse-ear cress), this protein is Protein kinase PINOID.